The primary structure comprises 250 residues: MIILITNDDGFESEGIKLLKEVARNFASEIWIVAPDTDRSGAARSLDHPVKQSIRINQHNEREFSVSGTPADCVIIALNKIMDKKPDLVLSGVNIGSNVGDDVCYSGTIGAVMEGAARSIPSIALSQAYHGGINWYNTKIFAPKVIAKLVKVGWPKNIAMSINFSATEKVKGVEFAEQGEYNIDGDLTFTENPDGSLSLNWSREHLGSGSVGKIKEGFITITPIKLDFTDYDTLNAMKNSYAEEFSSIVN.

A divalent metal cation is bound by residues D8, D9, S40, and N94.

Belongs to the SurE nucleotidase family. It depends on a divalent metal cation as a cofactor.

The protein resides in the cytoplasm. It catalyses the reaction a ribonucleoside 5'-phosphate + H2O = a ribonucleoside + phosphate. Functionally, nucleotidase that shows phosphatase activity on nucleoside 5'-monophosphates. In Wolbachia sp. subsp. Brugia malayi (strain TRS), this protein is 5'-nucleotidase SurE.